The chain runs to 239 residues: Ribitol-5-phosphate cytidylyltransferase (239 aa).

CTP contacts are provided by residues 7–10 (FAGG) and 80–86 (GETGQMS).

This sequence belongs to the IspD/TarI cytidylyltransferase family. TarI subfamily.

The enzyme catalyses D-ribitol 5-phosphate + CTP + H(+) = CDP-L-ribitol + diphosphate. Its pathway is cell wall biogenesis; poly(ribitol phosphate) teichoic acid biosynthesis. Catalyzes the transfer of the cytidylyl group of CTP to D-ribitol 5-phosphate. This chain is Ribitol-5-phosphate cytidylyltransferase, found in Streptococcus agalactiae serotype III (strain NEM316).